Reading from the N-terminus, the 593-residue chain is NADH-quinone oxidoreductase subunit C/D (593 aa).

Positions 1–184 (MTADSALYIP…DPYSLSAAKQ (184 aa)) are NADH dehydrogenase I subunit C. The tract at residues 208-593 (DYMFLNLGPN…IDFVMADVDR (386 aa)) is NADH dehydrogenase I subunit D.

In the N-terminal section; belongs to the complex I 30 kDa subunit family. It in the C-terminal section; belongs to the complex I 49 kDa subunit family. NDH-1 is composed of 13 different subunits. Subunits NuoB, CD, E, F, and G constitute the peripheral sector of the complex.

The protein localises to the cell inner membrane. The enzyme catalyses a quinone + NADH + 5 H(+)(in) = a quinol + NAD(+) + 4 H(+)(out). In terms of biological role, NDH-1 shuttles electrons from NADH, via FMN and iron-sulfur (Fe-S) centers, to quinones in the respiratory chain. The immediate electron acceptor for the enzyme in this species is believed to be ubiquinone. Couples the redox reaction to proton translocation (for every two electrons transferred, four hydrogen ions are translocated across the cytoplasmic membrane), and thus conserves the redox energy in a proton gradient. This chain is NADH-quinone oxidoreductase subunit C/D, found in Pseudomonas aeruginosa (strain UCBPP-PA14).